A 100-amino-acid polypeptide reads, in one-letter code: Integration host factor subunit alpha (100 aa).

This sequence belongs to the bacterial histone-like protein family. As to quaternary structure, heterodimer of an alpha and a beta chain.

Its function is as follows. This protein is one of the two subunits of integration host factor, a specific DNA-binding protein that functions in genetic recombination as well as in transcriptional and translational control. The chain is Integration host factor subunit alpha from Alcanivorax borkumensis (strain ATCC 700651 / DSM 11573 / NCIMB 13689 / SK2).